The following is a 51-amino-acid chain: Sperm protamine P1 (51 aa).

The protein belongs to the protamine P1 family. Testis.

The protein resides in the nucleus. Its subcellular location is the chromosome. Its function is as follows. Protamines substitute for histones in the chromatin of sperm during the haploid phase of spermatogenesis. They compact sperm DNA into a highly condensed, stable and inactive complex. The sequence is that of Sperm protamine P1 (PRM1) from Nasalis larvatus (Proboscis monkey).